A 176-amino-acid polypeptide reads, in one-letter code: WASH complex subunit 3 (176 aa).

A coiled-coil region spans residues 47–74 (ETKFVEMERQLQKTEAALIILEAKLASI). 2 disordered regions span residues 84-123 (ATEA…PESV) and 152-176 (KMQS…GQRE). Residues 104–115 (TTEPPTTENPTE) show a composition bias toward low complexity.

The protein belongs to the CCDC53 family. As to quaternary structure, component of the WASH complex.

Its subcellular location is the early endosome. Acts at least in part as component of the WASH complex which may regulate wash nucleation-promoting factor (NPF) activity and is required for its membrane targeting during endosomal sorting. During embryogenesis, not involved in the wash-dependent developmental migration of hemocytes anteriorly from the tail. This chain is WASH complex subunit 3, found in Drosophila melanogaster (Fruit fly).